Reading from the N-terminus, the 199-residue chain is Probable GTP-binding protein EngB (199 aa).

One can recognise an EngB-type G domain in the interval 25 to 199 (IGMEVAFVGY…LKRVLNNWLR (175 aa)). Residues S40 and T62 each coordinate Mg(2+).

Belongs to the TRAFAC class TrmE-Era-EngA-EngB-Septin-like GTPase superfamily. EngB GTPase family. It depends on Mg(2+) as a cofactor.

In terms of biological role, necessary for normal cell division and for the maintenance of normal septation. The polypeptide is Probable GTP-binding protein EngB (Blochmanniella pennsylvanica (strain BPEN)).